The following is a 495-amino-acid chain: Calcium-dependent protein kinase 11 (495 aa).

One can recognise a Protein kinase domain in the interval 26-284 (YLLGKKLGQG…AHEALCHPWI (259 aa)). Residues 32–40 (LGQGQFGTT) and Lys-55 each bind ATP. Asp-150 (proton acceptor) is an active-site residue. Ser-190 is modified (phosphoserine). The segment at 290-320 (APDKPLDPAVLSRLKQFSQMNKIKKMALRVI) is autoinhibitory domain. EF-hand domains lie at 327-362 (EEIG…VGSE), 363-398 (LMES…MNKM), 399-434 (EREE…FGLC), and 438-468 (LDDM…GDGV). Asp-340, Asp-342, Ser-344, Thr-346, Glu-351, Asp-376, Asp-378, Ser-380, Thr-382, Glu-387, Asp-412, Asp-414, Ser-416, Tyr-418, Glu-423, Asp-446, Asp-448, Asp-450, Lys-452, and Glu-457 together coordinate Ca(2+).

The protein belongs to the protein kinase superfamily. Ser/Thr protein kinase family. CDPK subfamily. As to quaternary structure, interacts with Di19.

It localises to the cytoplasm. The protein localises to the nucleus. It carries out the reaction L-seryl-[protein] + ATP = O-phospho-L-seryl-[protein] + ADP + H(+). The catalysed reaction is L-threonyl-[protein] + ATP = O-phospho-L-threonyl-[protein] + ADP + H(+). Activated by calcium. Autophosphorylation may play an important role in the regulation of the kinase activity. May play a role in signal transduction pathways that involve calcium as a second messenger. Functions as a regulator of the calcium-mediated abscisic acid (ABA) signaling pathway. Phosphorylates ABA-responsive transcription factors ABF1 and ABF4 in vitro. This is Calcium-dependent protein kinase 11 (CPK11) from Arabidopsis thaliana (Mouse-ear cress).